Reading from the N-terminus, the 457-residue chain is Equilibrative nucleoside transporter 1 (457 aa).

Over 1 to 12 (MTTSHQPQDRYK) the chain is Cytoplasmic. A helical transmembrane segment spans residues 13–29 (AVWLIFFVLGLGTLLPW). Residues 30–82 (NFFITATQYFTSRLNTSQNISLVTNQSCESTEALADPSVSLPARSSLSAIFNN) are Extracellular-facing. Residues Asn44, Asn48, and Asn54 are each glycosylated (N-linked (GlcNAc...) asparagine). Residues 83 to 107 (VMTLCAMLPLLIFTCLNSFLHQKVS) form a helical membrane-spanning segment. Topologically, residues 108–111 (QSLR) are cytoplasmic. Residues 112–130 (ILGSLLAILLVFLVTATLV) traverse the membrane as a helical segment. The Extracellular segment spans residues 131–138 (KVQMDALS). The chain crosses the membrane as a helical span at residues 139–157 (FFIITMIKIVLINSFGAIL). Over 158–174 (QASLFGLAGVLPANYTA) the chain is Cytoplasmic. The helical transmembrane segment at 175–199 (PIMSGQGLAGFFTSVAMICAVASGS) threads the bilayer. Residues 200–206 (KLSESAF) are Extracellular-facing. Residues 207-227 (GYFITACAVVILAILCYLALP) traverse the membrane as a helical segment. Residues 228 to 291 (WMEFYRHYLQ…IKAILKSIWV (64 aa)) are Cytoplasmic-facing. Ser254 is subject to Phosphoserine. Residues 255–266 (EGEEPRGGREES) are compositionally biased toward basic and acidic residues. The segment at 255–275 (EGEEPRGGREESGVPGPNSLP) is disordered. Position 273 is a phosphoserine (Ser273). A helical transmembrane segment spans residues 292 to 311 (LALSVCFIFTVTIGLFPAVT). At 312–323 (AEVESSIAGTSP) the chain is on the extracellular side. The chain crosses the membrane as a helical span at residues 324–343 (WKNCYFIPVACFLNFNVFDW). The Cytoplasmic portion of the chain corresponds to 344–360 (LGRSLTAICMWPGQDSR). Residues 361–379 (WLPVLVACRVVFIPLLMLC) form a helical membrane-spanning segment. Over 380-394 (NVKQHHYLPSLFKHD) the chain is Extracellular. The chain crosses the membrane as a helical span at residues 395–414 (VWFITFMAAFAFSNGYLASL). The Cytoplasmic segment spans residues 415 to 432 (CMCFGPKKVKPAEAETAG). The helical transmembrane segment at 433–453 (NIMSFFLCLGLALGAVLSFLL) threads the bilayer. The Extracellular segment spans residues 454 to 457 (RALV).

The protein belongs to the SLC29A/ENT transporter (TC 2.A.57) family. As to quaternary structure, identified in a complex with STOM. Expressed in jejunum, liver and lung. Expressed in testis at the blood-testis barrier (at protein level). Expressed in ventricular myocytes (at protein level). Expressed in kidney.

Its subcellular location is the basolateral cell membrane. It is found in the apical cell membrane. The protein localises to the cell membrane. The enzyme catalyses adenosine(in) = adenosine(out). It carries out the reaction guanosine(in) = guanosine(out). The catalysed reaction is inosine(in) = inosine(out). It catalyses the reaction uridine(out) = uridine(in). The enzyme catalyses thymidine(in) = thymidine(out). It carries out the reaction cytidine(in) = cytidine(out). The catalysed reaction is adenine(out) = adenine(in). It catalyses the reaction guanine(out) = guanine(in). The enzyme catalyses thymine(out) = thymine(in). It carries out the reaction uracil(in) = uracil(out). The catalysed reaction is hypoxanthine(out) = hypoxanthine(in). Its activity is regulated as follows. Transport activity is sensitive to low concentrations of the inhibitor nitrobenzylmercaptopurine riboside (NBMPR). Uniporter involved in the facilitative transport of nucleosides and nucleobases, and contributes to maintaining their cellular homeostasis. Functions as a Na(+)-independent transporter. Involved in the transport of nucleosides such as adenosine, thymidine and uridine. Also transports purine nucleobases (hypoxanthine, adenine, guanine) and pyrimidine nucleobases (thymine, uracil). Mediates basolateral nucleoside uptake into Sertoli cells, thereby regulating the transport of nucleosides in testis across the blood-testis barrier. Regulates inosine levels in brown adipocytes tissues (BAT) and extracellular inosine levels, which controls BAT-dependent energy expenditure. The protein is Equilibrative nucleoside transporter 1 of Rattus norvegicus (Rat).